A 547-amino-acid chain; its full sequence is Protein RBL (547 aa).

5 WD repeats span residues 21–60, 65–104, 214–253, 285–332, and 334–373; these read LEHGVIKCVAFNHRGSLLAAGCADGGCVIWDFETRGIAKE, DCSAAITSVSWSKYGHRLLVSAADKSLTLWDVSTGEKIAR, SGAAPVKNIVFSRNGQYLLTNSHDRTIRIYENLLPAKNVL, EFQD…VKIL, and GPKEALIDLAWHPVHPIIVSVSLAGLVYIWAKDYTENWSA. The tract at residues 466–547 is disordered; that stretch reads SPASEEAGQN…GGDDDDDAYY (82 aa). Basic and acidic residues predominate over residues 499–511; the sequence is SEKAMELQAEKAK. A compositionally biased stretch (acidic residues) spans 530 to 547; that stretch reads QETDDSINGGDDDDDAYY.

In terms of assembly, part of a complex composed of TRO, RBL and WDR5A. Interacts with TRO and WDR5A, but not with WDR5B. This complex is formed during both vegetative and reproductive development. In terms of tissue distribution, strongly expressed in root tips, shoot apices, vascular tissues, developing embryos and endosperms.

The protein localises to the nucleus. In terms of biological role, promotes the expression of FLC and FLC homologs to repress the floral transition. Promotes WRKY70 and LTP7 genes epigenetic methylation (e.g. H3K4me3) and subsequent expression. In Arabidopsis thaliana (Mouse-ear cress), this protein is Protein RBL.